Here is a 628-residue protein sequence, read N- to C-terminus: LRR receptor kinase SERK2 (628 aa).

The first 31 residues, 1–31 (MAEARLLRRRRLCLAVPFVWVVAVAVSRVGA), serve as a signal peptide directing secretion. LRR repeat units follow at residues 97-121 (LKNL…LGNL), 123-144 (NLVS…TLGQ), 145-169 (LYKL…LTNI), and 170-194 (TTLQ…SFSL). Asn109, Asn120, Asn133, Asn155, Asn168, and Asn181 each carry an N-linked (GlcNAc...) asparagine glycan. A helical transmembrane segment spans residues 243-263 (AIAGGVAAAAALLFAVPAIGF). The residue at position 303 (Thr303) is a Phosphothreonine. A Protein kinase domain is found at 306–593 (FSNKNILGRG…GLAERWEEWQ (288 aa)). Position 312 to 320 (312 to 320 (LGRGGFGKV)) interacts with ATP. Phosphoserine is present on Ser329. Lys334 is a binding site for ATP. A Phosphothreonine modification is found at Thr350. Residues Ser356 and Ser387 each carry the phosphoserine modification. The active-site Proton acceptor is the Asp433. 3 positions are modified to phosphothreonine: Thr463, Thr466, and Thr472. Residue Ser615 is modified to Phosphoserine. Residue Thr616 is modified to Phosphothreonine. Ser625 is modified (phosphoserine).

Belongs to the protein kinase superfamily. Ser/Thr protein kinase family. As to quaternary structure, interacts with BRI1. Interacts with XA21, XA26/XA3 and FLS2. In terms of processing, autophosphorylated on serine and threonine residues. As to expression, expressed in flag leaves. Expressed in roots, shoot apex, leaf blades, leaf sheaths, panicles and flowers. Expressed leaves, stems, sheaths and flowers.

It is found in the cell membrane. It carries out the reaction L-seryl-[protein] + ATP = O-phospho-L-seryl-[protein] + ADP + H(+). The catalysed reaction is L-threonyl-[protein] + ATP = O-phospho-L-threonyl-[protein] + ADP + H(+). Functionally, LRR receptor kinase involved in positive regulation of somatic embryogenesis and defense response against the rice blast fungus pathogen Magnaporthe oryzae. Involved in the positive regulation of receptor kinase-mediated immunity. Required for immunity mediated by the LRR receptor kinases XA21 and XA26/XA3 which recognize effectors from the bacterial pathogen Xanthomonas oryzae pv. oryzae (Xoo). Required for the immune response mediated by the LRR receptor kinase FLS2 which recognizes specifically the bacterial flagellin (flg22) effector. Kinase activity and direct interaction with the immune receptors is critical for their function. Involved in the regulation of plant growth through the brassinosteroid (BR) signaling pathway. The chain is LRR receptor kinase SERK2 from Oryza sativa subsp. japonica (Rice).